We begin with the raw amino-acid sequence, 185 residues long: uncharacterized protein (185 aa).

Met1 carries the post-translational modification N-acetylmethionine. Composition is skewed to basic and acidic residues over residues 1–18 (MDAFSLKKDNRKKFQDKQ), 26–47 (TPSDRKYRLLNRQKEEKATTEE), and 59–71 (SNEDRYYEDPVLE). 2 disordered regions span residues 1-71 (MDAF…PVLE) and 155-185 (DHDRAGKKISAPSTDLPEELETDQDFLDGLL). Acidic residues predominate over residues 170 to 185 (LPEELETDQDFLDGLL).

This is an uncharacterized protein from Saccharomyces cerevisiae (strain ATCC 204508 / S288c) (Baker's yeast).